The chain runs to 236 residues: 2-C-methyl-D-erythritol 4-phosphate cytidylyltransferase (236 aa).

Belongs to the IspD/TarI cytidylyltransferase family. IspD subfamily. Homodimer.

It carries out the reaction 2-C-methyl-D-erythritol 4-phosphate + CTP + H(+) = 4-CDP-2-C-methyl-D-erythritol + diphosphate. It functions in the pathway isoprenoid biosynthesis; isopentenyl diphosphate biosynthesis via DXP pathway; isopentenyl diphosphate from 1-deoxy-D-xylulose 5-phosphate: step 2/6. Functionally, catalyzes the formation of 4-diphosphocytidyl-2-C-methyl-D-erythritol from CTP and 2-C-methyl-D-erythritol 4-phosphate (MEP). The chain is 2-C-methyl-D-erythritol 4-phosphate cytidylyltransferase from Escherichia coli O139:H28 (strain E24377A / ETEC).